The primary structure comprises 340 residues: Anthranilate phosphoribosyltransferase (340 aa).

Residues Gly78, 81-82, Thr86, 88-91, 106-114, and Ser118 each bind 5-phospho-alpha-D-ribose 1-diphosphate; these read GD, NIST, and KHGNRSVSS. Residue Gly78 coordinates anthranilate. Ser90 contacts Mg(2+). Position 109 (Asn109) interacts with anthranilate. An anthranilate-binding site is contributed by Arg164. Residues Asp223 and Glu224 each coordinate Mg(2+).

The protein belongs to the anthranilate phosphoribosyltransferase family. In terms of assembly, homodimer. The cofactor is Mg(2+).

It catalyses the reaction N-(5-phospho-beta-D-ribosyl)anthranilate + diphosphate = 5-phospho-alpha-D-ribose 1-diphosphate + anthranilate. It participates in amino-acid biosynthesis; L-tryptophan biosynthesis; L-tryptophan from chorismate: step 2/5. In terms of biological role, catalyzes the transfer of the phosphoribosyl group of 5-phosphorylribose-1-pyrophosphate (PRPP) to anthranilate to yield N-(5'-phosphoribosyl)-anthranilate (PRA). This Bacillus pumilus (Bacillus mesentericus) protein is Anthranilate phosphoribosyltransferase.